Reading from the N-terminus, the 297-residue chain is Probable endonuclease 4 (297 aa).

Histidine 69, histidine 110, glutamate 145, aspartate 179, histidine 182, histidine 214, aspartate 227, histidine 229, and glutamate 259 together coordinate Zn(2+).

This sequence belongs to the AP endonuclease 2 family. Requires Zn(2+) as cofactor.

The catalysed reaction is Endonucleolytic cleavage to 5'-phosphooligonucleotide end-products.. Its function is as follows. Endonuclease IV plays a role in DNA repair. It cleaves phosphodiester bonds at apurinic or apyrimidinic (AP) sites, generating a 3'-hydroxyl group and a 5'-terminal sugar phosphate. In Bacillus velezensis (strain DSM 23117 / BGSC 10A6 / LMG 26770 / FZB42) (Bacillus amyloliquefaciens subsp. plantarum), this protein is Probable endonuclease 4.